We begin with the raw amino-acid sequence, 236 residues long: Ubiquinone biosynthesis O-methyltransferase (236 aa).

4 residues coordinate S-adenosyl-L-methionine: Arg-40, Gly-59, Asp-80, and Leu-124.

It belongs to the methyltransferase superfamily. UbiG/COQ3 family.

The enzyme catalyses a 3-demethylubiquinol + S-adenosyl-L-methionine = a ubiquinol + S-adenosyl-L-homocysteine + H(+). It carries out the reaction a 3-(all-trans-polyprenyl)benzene-1,2-diol + S-adenosyl-L-methionine = a 2-methoxy-6-(all-trans-polyprenyl)phenol + S-adenosyl-L-homocysteine + H(+). It participates in cofactor biosynthesis; ubiquinone biosynthesis. In terms of biological role, O-methyltransferase that catalyzes the 2 O-methylation steps in the ubiquinone biosynthetic pathway. The chain is Ubiquinone biosynthesis O-methyltransferase from Saccharophagus degradans (strain 2-40 / ATCC 43961 / DSM 17024).